The following is an 859-amino-acid chain: DNA mismatch repair protein MutS (859 aa).

612-619 provides a ligand contact to ATP; the sequence is GPNMGGKS. The disordered stretch occupies residues 797–822; sequence SKPLAPSATPPSSYAAPSPAAAPAQA.

This sequence belongs to the DNA mismatch repair MutS family.

This protein is involved in the repair of mismatches in DNA. It is possible that it carries out the mismatch recognition step. This protein has a weak ATPase activity. The polypeptide is DNA mismatch repair protein MutS (Alcanivorax borkumensis (strain ATCC 700651 / DSM 11573 / NCIMB 13689 / SK2)).